We begin with the raw amino-acid sequence, 540 residues long: Sterol O-acyltransferase 1 (540 aa).

The tract at residues 1–20 is disordered; it reads MSLRNRLSKSGENPEQDEAQ. The Cytoplasmic segment spans residues 1-128; the sequence is MSLRNRLSKS…LDELFEVDHI (128 aa). S2 bears the Phosphoserine mark. H127 provides a ligand contact to cholesterol. The chain crosses the membrane as a helical span at residues 129 to 150; that stretch reads RTIYHMFIALLILFVLSTIVVD. Topologically, residues 151–170 are lumenal; sequence YIDEGRLVLEFNLLAYAFGK. A helical membrane pass occupies residues 171-196; it reads FPTVIWTWWAMFLSTLSIPYFLFQRW. Topologically, residues 197–208 are cytoplasmic; the sequence is AHGYSKSSHPLI. The helical transmembrane segment at 209–234 threads the bilayer; it reads YSLVHGLLFLVFQLGVLGFVPTYVVL. The Lumenal segment spans residues 235–242; sequence AYTLPPAS. The helical transmembrane segment at 243 to 266 threads the bilayer; it reads RFILILEQIRLIMKAHSFVRENIP. Residues 267–309 are Cytoplasmic-facing; sequence RVLNAAKEKSSKDPLPTVNQYLYFLFAPTLIYRDNYPRTPTVR. The chain crosses the membrane as a helical span at residues 310–342; the sequence is WGYVAMQFLQVFGCLFYVYYIFERLCAPLFRNI. Residues 343 to 359 are Lumenal-facing; it reads KQEPFSARVLVLCVFNS. A helical transmembrane segment spans residues 360-385; that stretch reads ILPGVLILFLSFFAFLHCWLNAFAEM. Residues 386 to 433 are Cytoplasmic-facing; it reads LRFGDRMFYKDWWNSTSYSNYYRTWNVVVHDWLYYYVYKDLLWFFSKR. The FYXDWWN motif motif lies at 393-399; the sequence is FYKDWWN. 7 residues coordinate an acyl-CoA: N405, R408, N411, H415, Y423, K435, and S446. Residues 434-458 form a helical membrane-spanning segment; it reads FKSAAMLAVFALSAVVHEYALAICL. H450 is a catalytic residue. Over 459–464 the chain is Lumenal; that stretch reads SYFYPV. Residues 465-480 traverse the membrane as a helical segment; it reads LFVLFMFFGMAFNFIV. Over 481–486 the chain is Cytoplasmic; it reads NDSRKR. Residues 487 to 518 form a helical membrane-spanning segment; the sequence is PIWNIMVWASLFLGYGLILCFYSQEWYARQHC. C518 and C536 are joined by a disulfide. Topologically, residues 519–540 are lumenal; sequence PLKNPTFLDYVRPRTWTCRYVF.

Belongs to the membrane-bound acyltransferase family. Sterol o-acyltransferase subfamily. As to quaternary structure, may form homo- or heterodimers. Interacts with UBIAD1.

It localises to the endoplasmic reticulum membrane. The enzyme catalyses a sterol + a long-chain fatty acyl-CoA = a long-chain 3-hydroxysterol ester + CoA. It carries out the reaction cholesterol + an acyl-CoA = a cholesterol ester + CoA. The catalysed reaction is cholesterol + (9Z)-octadecenoyl-CoA = cholesteryl (9Z-octadecenoate) + CoA. It catalyses the reaction cholesterol + hexadecanoyl-CoA = cholesteryl hexadecanoate + CoA. The enzyme catalyses octadecanoyl-CoA + cholesterol = cholesteryl octadecanoate + CoA. It carries out the reaction (9Z,12Z)-octadecadienoyl-CoA + cholesterol = cholesteryl (9Z,12Z)-octadecadienoate + CoA. The catalysed reaction is (5Z,8Z,11Z,14Z)-eicosatetraenoyl-CoA + cholesterol = cholesteryl (5Z,8Z,11Z,14Z)-eicosatetraenoate + CoA. It catalyses the reaction (9Z)-hexadecenoyl-CoA + cholesterol = cholesteryl (9Z)-hexadecenoate + CoA. The enzyme catalyses (11Z)-octadecenoyl-CoA + cholesterol = cholesteryl (11Z)-octadecenoate + CoA. It carries out the reaction (7Z)-octadecenoyl-CoA + cholesterol = cholesteryl (7Z)-octadecenoate + CoA. Its function is as follows. Catalyzes the formation of fatty acid-cholesterol esters, which are less soluble in membranes than cholesterol. Plays a role in lipoprotein assembly and dietary cholesterol absorption. Preferentially utilizes oleoyl-CoA ((9Z)-octadecenoyl-CoA) as a substrate: shows a higher activity towards an acyl-CoA substrate with a double bond at the delta-9 position (9Z) than towards saturated acyl-CoA or an unsaturated acyl-CoA with a double bond at the delta-7 (7Z) or delta-11 (11Z) positions. The polypeptide is Sterol O-acyltransferase 1 (Mus musculus (Mouse)).